Here is a 300-residue protein sequence, read N- to C-terminus: GTPase Era (300 aa).

The 169-residue stretch at 4-172 (KSGFVALAGK…LEKIKEELPE (169 aa)) folds into the Era-type G domain. The interval 12 to 19 (GKPNVGKS) is G1. 12-19 (GKPNVGKS) is a binding site for GTP. The G2 stretch occupies residues 38–42 (QTTRN). The interval 59–62 (DTPG) is G3. GTP contacts are provided by residues 59–63 (DTPGI) and 121–124 (NKID). The G4 stretch occupies residues 121-124 (NKID). The interval 151–153 (ISA) is G5. The 86-residue stretch at 195–280 (IREKIFHLTR…YLDLNVKVKE (86 aa)) folds into the KH type-2 domain.

Belongs to the TRAFAC class TrmE-Era-EngA-EngB-Septin-like GTPase superfamily. Era GTPase family. As to quaternary structure, monomer.

The protein resides in the cytoplasm. It is found in the cell inner membrane. An essential GTPase that binds both GDP and GTP, with rapid nucleotide exchange. Plays a role in 16S rRNA processing and 30S ribosomal subunit biogenesis and possibly also in cell cycle regulation and energy metabolism. This chain is GTPase Era, found in Thermotoga petrophila (strain ATCC BAA-488 / DSM 13995 / JCM 10881 / RKU-1).